A 62-amino-acid chain; its full sequence is Large ribosomal subunit protein uL29 (62 aa).

Belongs to the universal ribosomal protein uL29 family.

In Acholeplasma laidlawii (strain PG-8A), this protein is Large ribosomal subunit protein uL29.